The chain runs to 159 residues: Eukaryotic translation initiation factor 5A-2 (159 aa).

Residues 1-10 (MSDDEHHFEA) show a composition bias toward basic and acidic residues. The disordered stretch occupies residues 1–25 (MSDDEHHFEASESGASKTYPQSAGN). The residue at position 2 (serine 2) is a Phosphoserine. A compositionally biased stretch (polar residues) spans 13–24 (SGASKTYPQSAG). At lysine 51 the chain carries Hypusine.

Belongs to the eIF-5A family. In terms of assembly, homodimer. Interacts with AHK4 and AHP1. Cytokinin regulates the formation of the AHP1-AHK4-ELF5A-2 complex. Lys-51 undergoes hypusination, a unique post-translational modification that consists in the addition of a butylamino group from spermidine to lysine side chain, leading to the formation of the unusual amino acid hypusine. eIF-5As are the only known proteins to undergo this modification, which is essential for their function. As to expression, ubiquitous. In roots, expressed mostly inside the stele of the mature zone.

It is found in the cytoplasm. Its subcellular location is the nucleus. Translation factor that promotes translation elongation and termination, particularly upon ribosome stalling at specific amino acid sequence contexts. Binds between the exit (E) and peptidyl (P) site of the ribosome and promotes rescue of stalled ribosome: specifically required for efficient translation of polyproline-containing peptides as well as other motifs that stall the ribosome. Acts as a ribosome quality control (RQC) cofactor by joining the RQC complex to facilitate peptidyl transfer during CAT tailing step. Regulates cytokinin-mediated root protoxylem specification and represses secifically the expression of AHP6. Regulates the induction of programmed cell death caused by infection with virulent pathogen. This chain is Eukaryotic translation initiation factor 5A-2 (ELF5A-2), found in Arabidopsis thaliana (Mouse-ear cress).